The primary structure comprises 291 residues: Lipoyl synthase 1 (291 aa).

Residues cysteine 34, cysteine 39, cysteine 45, cysteine 60, cysteine 64, cysteine 67, and serine 274 each coordinate [4Fe-4S] cluster. The Radical SAM core domain occupies 46 to 263; sequence FQAGTATFLI…QVYGEELGFL (218 aa).

Belongs to the radical SAM superfamily. Lipoyl synthase family. Requires [4Fe-4S] cluster as cofactor.

It localises to the cytoplasm. It carries out the reaction [[Fe-S] cluster scaffold protein carrying a second [4Fe-4S](2+) cluster] + N(6)-octanoyl-L-lysyl-[protein] + 2 oxidized [2Fe-2S]-[ferredoxin] + 2 S-adenosyl-L-methionine + 4 H(+) = [[Fe-S] cluster scaffold protein] + N(6)-[(R)-dihydrolipoyl]-L-lysyl-[protein] + 4 Fe(3+) + 2 hydrogen sulfide + 2 5'-deoxyadenosine + 2 L-methionine + 2 reduced [2Fe-2S]-[ferredoxin]. It functions in the pathway protein modification; protein lipoylation via endogenous pathway; protein N(6)-(lipoyl)lysine from octanoyl-[acyl-carrier-protein]: step 2/2. Its function is as follows. Catalyzes the radical-mediated insertion of two sulfur atoms into the C-6 and C-8 positions of the octanoyl moiety bound to the lipoyl domains of lipoate-dependent enzymes, thereby converting the octanoylated domains into lipoylated derivatives. This chain is Lipoyl synthase 1, found in Nostoc sp. (strain PCC 7120 / SAG 25.82 / UTEX 2576).